Consider the following 222-residue polypeptide: uncharacterized protein (222 aa).

This is an uncharacterized protein from Acanthamoeba polyphaga mimivirus (APMV).